A 402-amino-acid polypeptide reads, in one-letter code: Pyridinium-3,5-bisthiocarboxylic acid mononucleotide nickel insertion protein (402 aa).

It belongs to the LarC family.

It catalyses the reaction Ni(II)-pyridinium-3,5-bisthiocarboxylate mononucleotide = pyridinium-3,5-bisthiocarboxylate mononucleotide + Ni(2+). Involved in the biosynthesis of a nickel-pincer cofactor ((SCS)Ni(II) pincer complex). Binds Ni(2+), and functions in nickel delivery to pyridinium-3,5-bisthiocarboxylic acid mononucleotide (P2TMN), to form the mature cofactor. Is thus probably required for the activation of nickel-pincer cofactor-dependent enzymes. This chain is Pyridinium-3,5-bisthiocarboxylic acid mononucleotide nickel insertion protein, found in Desulfitobacterium hafniense (strain Y51).